A 130-amino-acid chain; its full sequence is Cytochrome b-c1 complex subunit 7 (130 aa).

It belongs to the UQCRB/QCR7 family. In terms of assembly, component of the ubiquinol-cytochrome c oxidoreductase (cytochrome b-c1 complex, complex III, CIII), a multisubunit enzyme composed of 3 respiratory subunits cytochrome b, cytochrome c1 and Rieske protein, 2 core protein subunits, and additional low-molecular weight protein subunits. The complex exists as an obligatory dimer and forms supercomplexes (SCs) in the inner mitochondrial membrane with cytochrome c oxidase (complex IV, CIV).

The protein localises to the mitochondrion inner membrane. Functionally, component of the ubiquinol-cytochrome c oxidoreductase, a multisubunit transmembrane complex that is part of the mitochondrial electron transport chain which drives oxidative phosphorylation. The respiratory chain contains 3 multisubunit complexes succinate dehydrogenase (complex II, CII), ubiquinol-cytochrome c oxidoreductase (cytochrome b-c1 complex, complex III, CIII) and cytochrome c oxidase (complex IV, CIV), that cooperate to transfer electrons derived from NADH and succinate to molecular oxygen, creating an electrochemical gradient over the inner membrane that drives transmembrane transport and the ATP synthase. The cytochrome b-c1 complex catalyzes electron transfer from ubiquinol to cytochrome c, linking this redox reaction to translocation of protons across the mitochondrial inner membrane, with protons being carried across the membrane as hydrogens on the quinol. In the process called Q cycle, 2 protons are consumed from the matrix, 4 protons are released into the intermembrane space and 2 electrons are passed to cytochrome c. This is Cytochrome b-c1 complex subunit 7 (UBCRBP) from Echinococcus multilocularis (Fox tapeworm).